The chain runs to 385 residues: Protein hunchback (385 aa).

Disordered regions lie at residues 1–94 (IGGI…YDAM) and 124–216 (ESRA…PGLR). The span at 63–77 (SASPSSSSKDSNGHS) shows a compositional bias: low complexity. Composition is skewed to basic and acidic residues over residues 126–135 (RASDARDHSP) and 173–203 (PERR…REGS). 4 consecutive C2H2-type zinc fingers follow at residues 229–251 (FKCK…SKEH), 258–280 (LCCR…MRNH), 286–308 (FQCS…LKSH), and 314–338 (YRCA…KYQH). Positions 361–385 (TRRGPKQKPLSKIFEQQTGTNNHSP) are disordered. The segment covering 374-385 (FEQQTGTNNHSP) has biased composition (polar residues).

Belongs to the hunchback C2H2-type zinc-finger protein family.

It localises to the nucleus. Functionally, gap class segmentation protein that controls development of head structures. The sequence is that of Protein hunchback (hb) from Bombyx mori (Silk moth).